The chain runs to 418 residues: Gamma-glutamyl phosphate reductase (418 aa).

The protein belongs to the gamma-glutamyl phosphate reductase family.

It is found in the cytoplasm. It carries out the reaction L-glutamate 5-semialdehyde + phosphate + NADP(+) = L-glutamyl 5-phosphate + NADPH + H(+). It participates in amino-acid biosynthesis; L-proline biosynthesis; L-glutamate 5-semialdehyde from L-glutamate: step 2/2. Functionally, catalyzes the NADPH-dependent reduction of L-glutamate 5-phosphate into L-glutamate 5-semialdehyde and phosphate. The product spontaneously undergoes cyclization to form 1-pyrroline-5-carboxylate. The protein is Gamma-glutamyl phosphate reductase of Agathobacter rectalis (strain ATCC 33656 / DSM 3377 / JCM 17463 / KCTC 5835 / VPI 0990) (Eubacterium rectale).